A 988-amino-acid chain; its full sequence is Bifunctional glutamine synthetase adenylyltransferase/adenylyl-removing enzyme (988 aa).

The segment at 1–474 is adenylyl removase; sequence MSSSAIDADI…HYSKLFEGDP (474 aa). The interval 480–988 is adenylyl transferase; sequence LPIDYAGGAE…FNRLIGGNGE (509 aa).

This sequence belongs to the GlnE family. Mg(2+) serves as cofactor.

It catalyses the reaction [glutamine synthetase]-O(4)-(5'-adenylyl)-L-tyrosine + phosphate = [glutamine synthetase]-L-tyrosine + ADP. It carries out the reaction [glutamine synthetase]-L-tyrosine + ATP = [glutamine synthetase]-O(4)-(5'-adenylyl)-L-tyrosine + diphosphate. Involved in the regulation of glutamine synthetase GlnA, a key enzyme in the process to assimilate ammonia. When cellular nitrogen levels are high, the C-terminal adenylyl transferase (AT) inactivates GlnA by covalent transfer of an adenylyl group from ATP to specific tyrosine residue of GlnA, thus reducing its activity. Conversely, when nitrogen levels are low, the N-terminal adenylyl removase (AR) activates GlnA by removing the adenylyl group by phosphorolysis, increasing its activity. The regulatory region of GlnE binds the signal transduction protein PII (GlnB) which indicates the nitrogen status of the cell. This is Bifunctional glutamine synthetase adenylyltransferase/adenylyl-removing enzyme from Rhodopseudomonas palustris (strain HaA2).